The primary structure comprises 499 residues: Patatin-like protein 6 (499 aa).

One can recognise a PNPLA domain in the interval 111 to 314 (LSIDSGGMRG…AMSNPTAAAI (204 aa)). The GGXR motif lies at 116-119 (GGMR). Catalysis depends on S155, which acts as the Nucleophile. D301 functions as the Proton acceptor in the catalytic mechanism. A DGA/G motif is present at residues 301–303 (DGG).

The protein belongs to the patatin family. In terms of tissue distribution, highly expressed in siliques and at lower levels in roots and flowers.

In terms of biological role, possesses non-specific lipolytic acyl hydrolase (LAH) activity. Hydrolyzes phospholipids as well as galactolipids. May play a role in disease resistance. This is Patatin-like protein 6 (PLP6) from Arabidopsis thaliana (Mouse-ear cress).